The following is a 310-amino-acid chain: MKGQQKTAETEEGTVQIQEGAVATGEDPTSVAIASIQSAATFPDPNVKYVFRTENGGQVMYRVIQVSEGQLDGQTEGTGAISGYPATQSMTQAVIQGAFTSDDTVDTEGTAAETHYTYFPSTAVGDGAGGTTSGSTAAVVTTQGSEALLGQATPPGTGQFFVMMSPQEVLQGGSQRSIAPRTHPYSPKSAAPRTTRDEKRRAQHNEVERRRRDKINNWIVQLSKIIPDCSMESTKSGQSKGGILSKACDYIQELRQSNHRLSEELQGLDQLQLDNDVLRQQVEDLKNKNLLLRAQLRHHGLEVVIKNDSN.

Over residues 1–17 the composition is skewed to polar residues; it reads MKGQQKTAETEEGTVQI. Disordered stretches follow at residues 1–26 and 171–209; these read MKGQ…ATGE and QGGS…EVER. Positions 194 to 209 are enriched in basic and acidic residues; that stretch reads TTRDEKRRAQHNEVER. Residues 199–254 form the bHLH domain; it reads KRRAQHNEVERRRRDKINNWIVQLSKIIPDCSMESTKSGQSKGGILSKACDYIQEL. The leucine-zipper stretch occupies residues 271–292; that stretch reads LQLDNDVLRQQVEDLKNKNLLL. A Glycyl lysine isopeptide (Lys-Gly) (interchain with G-Cter in SUMO2) cross-link involves residue Lys-306.

As to quaternary structure, efficient DNA binding requires dimerization with another bHLH protein. Binds DNA as a homodimer or a heterodimer (USF1/USF2).

The protein localises to the nucleus. Its function is as follows. Transcription factor that binds to a symmetrical DNA sequence (E-boxes) (5'-CACGTG-3') that is found in a variety of viral and cellular promoters. Regulates the expression of the surfactant protein-A (SP-A) gene. This is Upstream stimulatory factor 1 (USF1) from Oryctolagus cuniculus (Rabbit).